The primary structure comprises 207 residues: Large ribosomal subunit protein uL4 (207 aa).

Residues 47 to 78 form a disordered region; the sequence is GTASSKTRAEVRGGGKKPWRQKGTGRARVGSS. Residues 60 to 71 show a composition bias toward basic residues; it reads GGKKPWRQKGTG.

The protein belongs to the universal ribosomal protein uL4 family. In terms of assembly, part of the 50S ribosomal subunit.

Its function is as follows. One of the primary rRNA binding proteins, this protein initially binds near the 5'-end of the 23S rRNA. It is important during the early stages of 50S assembly. It makes multiple contacts with different domains of the 23S rRNA in the assembled 50S subunit and ribosome. In terms of biological role, forms part of the polypeptide exit tunnel. The protein is Large ribosomal subunit protein uL4 of Syntrophomonas wolfei subsp. wolfei (strain DSM 2245B / Goettingen).